A 122-amino-acid chain; its full sequence is Basic phospholipase A2 Cdr-12 (122 aa).

7 cysteine pairs are disulfide-bonded: Cys26–Cys115, Cys28–Cys44, Cys43–Cys95, Cys49–Cys122, Cys50–Cys88, Cys57–Cys81, and Cys75–Cys86. Residues Tyr27, Gly29, and Gly31 each contribute to the Ca(2+) site. Residue His47 is part of the active site. Ca(2+) is bound at residue Asp48. The active site involves Asp89.

Requires Ca(2+) as cofactor. Expressed by the venom gland.

It localises to the secreted. The catalysed reaction is a 1,2-diacyl-sn-glycero-3-phosphocholine + H2O = a 1-acyl-sn-glycero-3-phosphocholine + a fatty acid + H(+). In terms of biological role, snake venom phospholipase A2 (PLA2) that induces myonecrosis and edema upon intramuscular injections in mice. In vitro, causes a potent blockade of neuromuscular transmission in young chicken biventer cervicis preparation and produces cytotoxicity in murine C2C12 skeletal muscle myotubes and lack cytolytic activity upon myoblasts in vitro. PLA2 catalyzes the calcium-dependent hydrolysis of the 2-acyl groups in 3-sn-phosphoglycerides. This is Basic phospholipase A2 Cdr-12 from Crotalus durissus ruruima (South American rattlesnake).